Consider the following 162-residue polypeptide: ATP synthase subunit b (162 aa).

A helical transmembrane segment spans residues Ile4–Ser24.

This sequence belongs to the ATPase B chain family. In terms of assembly, F-type ATPases have 2 components, F(1) - the catalytic core - and F(0) - the membrane proton channel. F(1) has five subunits: alpha(3), beta(3), gamma(1), delta(1), epsilon(1). F(0) has three main subunits: a(1), b(2) and c(10-14). The alpha and beta chains form an alternating ring which encloses part of the gamma chain. F(1) is attached to F(0) by a central stalk formed by the gamma and epsilon chains, while a peripheral stalk is formed by the delta and b chains.

The protein resides in the cell membrane. Functionally, f(1)F(0) ATP synthase produces ATP from ADP in the presence of a proton or sodium gradient. F-type ATPases consist of two structural domains, F(1) containing the extramembraneous catalytic core and F(0) containing the membrane proton channel, linked together by a central stalk and a peripheral stalk. During catalysis, ATP synthesis in the catalytic domain of F(1) is coupled via a rotary mechanism of the central stalk subunits to proton translocation. Component of the F(0) channel, it forms part of the peripheral stalk, linking F(1) to F(0). This chain is ATP synthase subunit b, found in Halalkalibacterium halodurans (strain ATCC BAA-125 / DSM 18197 / FERM 7344 / JCM 9153 / C-125) (Bacillus halodurans).